We begin with the raw amino-acid sequence, 356 residues long: GTPase Obg (356 aa).

Residues 1–159 (MKFLDEAKVY…RWIWLRMKLI (159 aa)) enclose the Obg domain. One can recognise an OBG-type G domain in the interval 160–327 (ADAGLVGLPN…ALRKLADVIS (168 aa)). Residues 166–173 (GLPNAGKS), 191–195 (FTTLH), 212–215 (DIPG), 279–282 (NKID), and 308–310 (SGA) contribute to the GTP site. 2 residues coordinate Mg(2+): S173 and T193. The tract at residues 332–356 (SIKAKSTSDSAATEEPWAAPLPPQG) is disordered.

The protein belongs to the TRAFAC class OBG-HflX-like GTPase superfamily. OBG GTPase family. In terms of assembly, monomer. Mg(2+) serves as cofactor.

Its subcellular location is the cytoplasm. In terms of biological role, an essential GTPase which binds GTP, GDP and possibly (p)ppGpp with moderate affinity, with high nucleotide exchange rates and a fairly low GTP hydrolysis rate. Plays a role in control of the cell cycle, stress response, ribosome biogenesis and in those bacteria that undergo differentiation, in morphogenesis control. The protein is GTPase Obg of Bradyrhizobium sp. (strain BTAi1 / ATCC BAA-1182).